Here is a 287-residue protein sequence, read N- to C-terminus: Phospholipase A and acyltransferase 5 (287 aa).

Disordered regions lie at residues 48 to 72 and 86 to 138; these read PKQISRTASTESSDTQPTNDSASSQ and DRGL…SNQK. Composition is skewed to polar residues over residues 49–72 and 128–138; these read KQISRTASTESSDTQPTNDSASSQ and LKNQAAESNQK. The LRAT domain occupies 144 to 257; the sequence is LIEIFRIGYE…LRYGVPRSQQ (114 aa). Active-site residues include histidine 154 and histidine 166. Catalysis depends on cysteine 241, which acts as the Acyl-thioester intermediate.

It belongs to the H-rev107 family. Expressed in testis.

Its subcellular location is the cytoplasm. It is found in the cytosol. The enzyme catalyses a 1,2-diacyl-sn-glycero-3-phosphocholine + H2O = a 1-acyl-sn-glycero-3-phosphocholine + a fatty acid + H(+). The catalysed reaction is a 1,2-diacyl-sn-glycero-3-phosphocholine + H2O = a 2-acyl-sn-glycero-3-phosphocholine + a fatty acid + H(+). It catalyses the reaction 1-hexadecanoyl-2-(5Z,8Z,11Z,14Z-eicosatetraenoyl)-sn-glycero-3-phosphocholine + 1,2-di-(9Z-octadecenoyl)-sn-glycero-3-phosphoethanolamine = N-(5Z,8Z,11Z,14Z-eicosatetraenoyl)-1,2-di-(9Z-octadecenoyl)-sn-glycero-3-phosphoethanolamine + 1-hexadecanoyl-sn-glycero-3-phosphocholine + H(+). It carries out the reaction 1,2-di-(9Z-octadecenoyl)-sn-glycero-3-phosphoethanolamine + 1,2-dihexadecanoyl-sn-glycero-3-phosphocholine = N-hexadecanoyl-1,2-di-(9Z-octadecenoyl)-sn-glycero-3-phosphoethanolamine + 1-hexadecanoyl-sn-glycero-3-phosphocholine + H(+). The enzyme catalyses 1,2-di-(9Z-octadecenoyl)-sn-glycero-3-phosphoethanolamine + 1,2-dihexadecanoyl-sn-glycero-3-phosphocholine = N-hexadecanoyl-1,2-di-(9Z-octadecenoyl)-sn-glycero-3-phosphoethanolamine + 2-hexadecanoyl-sn-glycero-3-phosphocholine + H(+). The catalysed reaction is a 1,2-diacyl-sn-glycero-3-phosphoethanolamine + a 1,2-diacyl-sn-glycero-3-phosphocholine = an N-acyl-1,2-diacyl-sn-glycero-3-phosphoethanolamine + a 1-acyl-sn-glycero-3-phosphocholine + H(+). It catalyses the reaction a 1,2-diacyl-sn-glycero-3-phosphoethanolamine + a 1,2-diacyl-sn-glycero-3-phosphocholine = an N-acyl-1,2-diacyl-sn-glycero-3-phosphoethanolamine + a 2-acyl-sn-glycero-3-phosphocholine + H(+). It carries out the reaction 1-hexadecanoyl-2-(9Z-octadecenoyl)-sn-glycero-3-phosphocholine + 1,2-di-(9Z-octadecenoyl)-sn-glycero-3-phosphoethanolamine = N,1,2-tri-(9Z-octadecenoyl)-sn-glycero-3-phosphoethanolamine + 1-hexadecanoyl-sn-glycero-3-phosphocholine + H(+). Exhibits both phospholipase A1/2 and acyltransferase activities. Shows phospholipase A1 (PLA1) and A2 (PLA2) activity, catalyzing the calcium-independent release of fatty acids from the sn-1 or sn-2 position of glycerophospholipids. Shows N-acyltransferase activity, catalyzing the calcium-independent transfer of a fatty acyl group at the sn-1 position of phosphatidylcholine (PC) and other glycerophospholipids to the primary amine of phosphatidylethanolamine (PE), forming N-acylphosphatidylethanolamine (NAPE), which serves as precursor for N-acylethanolamines (NAEs). This is Phospholipase A and acyltransferase 5 from Rattus norvegicus (Rat).